Consider the following 1131-residue polypeptide: Inositol hexakisphosphate and diphosphoinositol-pentakisphosphate kinase 2 (1131 aa).

Residues 21-53 (DELLDQSKPENLDNLYEHTEDEEDEEDDEYDSP) are disordered. Residues 25-38 (DQSKPENLDNLYEH) show a composition bias toward basic and acidic residues. A compositionally biased stretch (acidic residues) spans 39-52 (TEDEEDEEDDEYDS). 67–68 (KK) is a substrate binding site. ATP-binding positions include R148, K201, H208, R227, 251–254 (EEFM), and 260–262 (DVK). 227–228 (RK) provides a ligand contact to substrate. Substrate-binding residues include K262 and R276. ATP-binding positions include S278, D323, and 335–337 (DVN). Residue 340 to 343 (SFVK) participates in substrate binding. The tract at residues 385–456 (PTTSGTKMEL…VLDIARQLLV (72 aa)) is polyphosphoinositide-binding domain. The disordered stretch occupies residues 912–951 (KGCEEDKNLPSGFGYRPASQENESSKKHTHANDSDEDLGV). Residues 934–951 (ESSKKHTHANDSDEDLGV) are compositionally biased toward basic and acidic residues.

It belongs to the histidine acid phosphatase family. VIP1 subfamily.

It is found in the cytoplasm. It localises to the cytosol. It catalyses the reaction 1D-myo-inositol hexakisphosphate + ATP = 1-diphospho-1D-myo-inositol 2,3,4,5,6-pentakisphosphate + ADP. The enzyme catalyses 5-diphospho-1D-myo-inositol 1,2,3,4,6-pentakisphosphate + ATP + H(+) = 1,5-bis(diphospho)-1D-myo-inositol 2,3,4,6-tetrakisphosphate + ADP. Functionally, bifunctional inositol kinase that acts in concert with the IP6K kinases IP6K1, IP6K2 and IP6K3 to synthesize the diphosphate group-containing inositol pyrophosphates diphosphoinositol pentakisphosphate, PP-InsP5, and bis-diphosphoinositol tetrakisphosphate, (PP)2-InsP4. PP-InsP5 and (PP)2-InsP4, also respectively called InsP7 and InsP8, regulate a variety of cellular processes, including apoptosis, vesicle trafficking, cytoskeletal dynamics, exocytosis, insulin signaling and neutrophil activation. Phosphorylates inositol hexakisphosphate (InsP6) at position 1 to produce PP-InsP5 which is in turn phosphorylated by IP6Ks to produce (PP)2-InsP4. Alternatively, phosphorylates PP-InsP5 at position 1, produced by IP6Ks from InsP6, to produce (PP)2-InsP4. The chain is Inositol hexakisphosphate and diphosphoinositol-pentakisphosphate kinase 2 from Xenopus laevis (African clawed frog).